Consider the following 98-residue polypeptide: Co-chaperonin GroES (98 aa).

The protein belongs to the GroES chaperonin family. In terms of assembly, heptamer of 7 subunits arranged in a ring. Interacts with the chaperonin GroEL.

It localises to the cytoplasm. Functionally, together with the chaperonin GroEL, plays an essential role in assisting protein folding. The GroEL-GroES system forms a nano-cage that allows encapsulation of the non-native substrate proteins and provides a physical environment optimized to promote and accelerate protein folding. GroES binds to the apical surface of the GroEL ring, thereby capping the opening of the GroEL channel. The protein is Co-chaperonin GroES of Coprothermobacter proteolyticus (strain ATCC 35245 / DSM 5265 / OCM 4 / BT).